The following is a 41-amino-acid chain: Large ribosomal subunit protein bL36 (41 aa).

Belongs to the bacterial ribosomal protein bL36 family.

This chain is Large ribosomal subunit protein bL36, found in Nitrobacter hamburgensis (strain DSM 10229 / NCIMB 13809 / X14).